The primary structure comprises 954 residues: Glycine dehydrogenase (decarboxylating) (954 aa).

Polar residues predominate over residues 1–13 (MTELLQSLSTQNE). Residues 1-24 (MTELLQSLSTQNEFVARHNGPNKS) are disordered. An N6-(pyridoxal phosphate)lysine modification is found at Lys-704.

The protein belongs to the GcvP family. The glycine cleavage system is composed of four proteins: P, T, L and H. Requires pyridoxal 5'-phosphate as cofactor.

The enzyme catalyses N(6)-[(R)-lipoyl]-L-lysyl-[glycine-cleavage complex H protein] + glycine + H(+) = N(6)-[(R)-S(8)-aminomethyldihydrolipoyl]-L-lysyl-[glycine-cleavage complex H protein] + CO2. Its function is as follows. The glycine cleavage system catalyzes the degradation of glycine. The P protein binds the alpha-amino group of glycine through its pyridoxal phosphate cofactor; CO(2) is released and the remaining methylamine moiety is then transferred to the lipoamide cofactor of the H protein. This chain is Glycine dehydrogenase (decarboxylating), found in Vibrio campbellii (strain ATCC BAA-1116).